The sequence spans 372 residues: Chorismate synthase (372 aa).

Arg-48 lines the NADP(+) pocket. Residues 125-127, Gly-285, 300-304, and Arg-327 each bind FMN; these read RSS and KPTPS.

The protein belongs to the chorismate synthase family. The cofactor is FMNH2.

The enzyme catalyses 5-O-(1-carboxyvinyl)-3-phosphoshikimate = chorismate + phosphate. It participates in metabolic intermediate biosynthesis; chorismate biosynthesis; chorismate from D-erythrose 4-phosphate and phosphoenolpyruvate: step 7/7. Functionally, catalyzes the anti-1,4-elimination of the C-3 phosphate and the C-6 proR hydrogen from 5-enolpyruvylshikimate-3-phosphate (EPSP) to yield chorismate, which is the branch point compound that serves as the starting substrate for the three terminal pathways of aromatic amino acid biosynthesis. This reaction introduces a second double bond into the aromatic ring system. This Methanocella arvoryzae (strain DSM 22066 / NBRC 105507 / MRE50) protein is Chorismate synthase.